Consider the following 327-residue polypeptide: Malate dehydrogenase (327 aa).

11–17 (GAAGQIA) lines the NAD(+) pocket. Substrate-binding residues include Arg-92 and Arg-98. Residues Asn-105, Gln-112, and 129-131 (VGN) contribute to the NAD(+) site. Asn-131 and Arg-162 together coordinate substrate. His-187 acts as the Proton acceptor in catalysis.

It belongs to the LDH/MDH superfamily. MDH type 2 family.

It catalyses the reaction (S)-malate + NAD(+) = oxaloacetate + NADH + H(+). Functionally, catalyzes the reversible oxidation of malate to oxaloacetate. The protein is Malate dehydrogenase of Nitrosospira multiformis (strain ATCC 25196 / NCIMB 11849 / C 71).